We begin with the raw amino-acid sequence, 797 residues long: Calcium-transporting ATPase CtpE (797 aa).

A run of 3 helical transmembrane segments spans residues 55-75 (LLLI…LLII), 215-235 (ILQF…YTQL), and 254-274 (VPMV…VGVV). Asp-301 serves as the catalytic 4-aspartylphosphate intermediate. Positions 301, 303, and 536 each coordinate Mg(2+). A run of 6 helical transmembrane segments spans residues 601 to 621 (TVYS…AIPL), 633 to 653 (IHVT…LSLA), 667 to 687 (VMTS…VTYL), 703 to 723 (ASTA…AVIA), 729 to 749 (WRLA…SLPL), and 764 to 784 (TSIA…MWWI).

This sequence belongs to the cation transport ATPase (P-type) (TC 3.A.3) family.

It localises to the cell membrane. The catalysed reaction is Ca(2+)(in) + ATP + H2O = Ca(2+)(out) + ADP + phosphate + H(+). P-type ATPase involved in specific uptake of calcium. In Mycobacterium bovis (strain ATCC BAA-935 / AF2122/97), this protein is Calcium-transporting ATPase CtpE (ctpE).